Here is a 369-residue protein sequence, read N- to C-terminus: UDP-N-acetylenolpyruvoylglucosamine reductase (369 aa).

In terms of domain architecture, FAD-binding PCMH-type spans 29–202; it reads VGPIARRVIT…LEVEFALDPS (174 aa). Arg176 is a catalytic residue. Ser257 serves as the catalytic Proton donor. Glu361 is a catalytic residue.

This sequence belongs to the MurB family. Requires FAD as cofactor.

It localises to the cytoplasm. The catalysed reaction is UDP-N-acetyl-alpha-D-muramate + NADP(+) = UDP-N-acetyl-3-O-(1-carboxyvinyl)-alpha-D-glucosamine + NADPH + H(+). The protein operates within cell wall biogenesis; peptidoglycan biosynthesis. Cell wall formation. This chain is UDP-N-acetylenolpyruvoylglucosamine reductase, found in Mycobacterium tuberculosis (strain ATCC 25177 / H37Ra).